Consider the following 67-residue polypeptide: MAAKKGVKTSTKKSDYYKVEGNTVERLKKACPKCGAGVFMAEHLNRFACGKCGYLEYKKNEKTETEE.

Zn(2+)-binding residues include Cys31, Cys34, Cys49, and Cys52. The C4-type zinc finger occupies 31–52 (CPKCGAGVFMAEHLNRFACGKC).

The protein belongs to the eukaryotic ribosomal protein eS31 family. As to quaternary structure, part of the 30S ribosomal subunit. The cofactor is Zn(2+).

The chain is Small ribosomal subunit protein eS31 from Methanococcus maripaludis (strain C5 / ATCC BAA-1333).